The primary structure comprises 183 residues: Translation initiation factor IF-3 (183 aa).

The protein belongs to the IF-3 family. Monomer.

It localises to the cytoplasm. Functionally, IF-3 binds to the 30S ribosomal subunit and shifts the equilibrium between 70S ribosomes and their 50S and 30S subunits in favor of the free subunits, thus enhancing the availability of 30S subunits on which protein synthesis initiation begins. This chain is Translation initiation factor IF-3, found in Pseudomonas fluorescens (strain SBW25).